Here is a 388-residue protein sequence, read N- to C-terminus: Pregnancy-associated glycoprotein (388 aa).

The first 15 residues, 1-15 (MKWFGVLGLVTLSEC), serve as a signal peptide directing secretion. The region spanning 74 to 385 (YMGIISVGTP…DRENDRIGLA (312 aa)) is the Peptidase A1 domain. Aspartate 92 is an active-site residue. 2 cysteine pairs are disulfide-bonded: cysteine 105/cysteine 110 and cysteine 266/cysteine 270. Residue aspartate 275 is part of the active site. Cysteine 309 and cysteine 344 form a disulfide bridge. A glycan (N-linked (GlcNAc...) asparagine) is linked at asparagine 356.

The protein belongs to the peptidase A1 family. In terms of tissue distribution, trophoblast and placental tissue.

Its subcellular location is the secreted. The protein localises to the extracellular space. The polypeptide is Pregnancy-associated glycoprotein (PAG) (Equus caballus (Horse)).